We begin with the raw amino-acid sequence, 416 residues long: Basic salivary proline-rich protein 2 (416 aa).

The first 16 residues, M1–A16, serve as a signal peptide directing secretion. Pyrrolidone carboxylic acid is present on Q17. The span at L19 to S28 shows a compositional bias: polar residues. Positions L19–Q416 are disordered. At S24 the chain carries Phosphoserine. Residues G34–P47 are compositionally biased toward low complexity. 2 stretches are compositionally biased toward pro residues: residues Q48–Q104 and R112–Q165. S52 carries the phosphoserine modification. 15 consecutive repeat copies span residues P53–P72, P74–P93, P94–S113, P114–P133, P135–P154, P155–R174, P176–P195, P197–P216, P217–R236, P238–P257, P259–P278, P279–R298, P300–P319, P321–P340, and P341–R360. A 15 X 20 AA approximate tandem repeats of P-P-G-K-P-Q-G-P-P-P-Q-G-[GD]-[NKS]-[KSQ]-[PRS]-[QRS] [GPS]-[PSAR]-[PSR] region spans residues P53–R360. N-linked (GlcNAc...) asparagine glycosylation occurs at N168. Pro residues predominate over residues P177 to Q227. A glycan (N-linked (GlcNAc...) asparagine) is linked at N230. S232 carries O-linked (Hex) serine glycosylation. Pro residues predominate over residues P239–Q289. The N-linked (GlcNAc...) asparagine glycan is linked to N272. A compositionally biased stretch (low complexity) spans G290–P300. 2 stretches are compositionally biased toward pro residues: residues P301–Q351 and Q378–Q416.

Post-translationally, N- and O-glycosylated. In head and neck cancer patients, O-glycosylated with glucosylgalactosyl carbohydrate moiety. This modification would require prior hydroxylation on the lysine residue. In terms of processing, proteolytically cleaved at the tripeptide Xaa-Pro-Gln, where Xaa in the P(3) position is mostly lysine. The endoprotease may be of microbial origin. Pyroglutamate formation occurs on terminal Gln residues of cleaved peptides. Pyroglutamate formation found on at least Gln-398 and Gln-400.

It localises to the secreted. This chain is Basic salivary proline-rich protein 2 (PRB2), found in Homo sapiens (Human).